A 677-amino-acid chain; its full sequence is DNA ligase (677 aa).

NAD(+) is bound by residues 34 to 38 (DAEYD), 83 to 84 (SL), and Glu117. Lys119 serves as the catalytic N6-AMP-lysine intermediate. Positions 140, 175, 283, and 307 each coordinate NAD(+). Zn(2+)-binding residues include Cys401, Cys404, Cys419, and Cys425. The 84-residue stretch at 594–677 (SHLSLLHGKT…QYISPNTNEN (84 aa)) folds into the BRCT domain.

The protein belongs to the NAD-dependent DNA ligase family. LigA subfamily. It depends on Mg(2+) as a cofactor. Requires Mn(2+) as cofactor.

The catalysed reaction is NAD(+) + (deoxyribonucleotide)n-3'-hydroxyl + 5'-phospho-(deoxyribonucleotide)m = (deoxyribonucleotide)n+m + AMP + beta-nicotinamide D-nucleotide.. In terms of biological role, DNA ligase that catalyzes the formation of phosphodiester linkages between 5'-phosphoryl and 3'-hydroxyl groups in double-stranded DNA using NAD as a coenzyme and as the energy source for the reaction. It is essential for DNA replication and repair of damaged DNA. The chain is DNA ligase from Ehrlichia canis (strain Jake).